Reading from the N-terminus, the 77-residue chain is Large ribosomal subunit protein uL29 (77 aa).

It belongs to the universal ribosomal protein uL29 family.

This is Large ribosomal subunit protein uL29 from Corynebacterium jeikeium (strain K411).